Reading from the N-terminus, the 357-residue chain is Probable cinnamyl alcohol dehydrogenase 7/8 (357 aa).

Cys47 lines the Zn(2+) pocket. NADP(+) is bound at residue Ser49. Zn(2+)-binding residues include His69, Glu70, Cys100, Cys103, Cys106, Cys114, and Cys163. Residues Thr167, Gly188 to Gly193, Ser211 to Lys216, Thr251, Gly275, and Ser298 to Ile300 each bind NADP(+).

It belongs to the zinc-containing alcohol dehydrogenase family. Homodimer. It depends on Zn(2+) as a cofactor.

It carries out the reaction (E)-cinnamyl alcohol + NADP(+) = (E)-cinnamaldehyde + NADPH + H(+). It catalyses the reaction (E)-coniferol + NADP(+) = (E)-coniferaldehyde + NADPH + H(+). The catalysed reaction is (E)-sinapyl alcohol + NADP(+) = (E)-sinapaldehyde + NADPH + H(+). The enzyme catalyses (E)-4-coumaroyl alcohol + NADP(+) = (E)-4-coumaraldehyde + NADPH + H(+). It carries out the reaction (E)-caffeyl alcohol + NADP(+) = (E)-caffeyl aldehyde + NADPH + H(+). Its pathway is aromatic compound metabolism; phenylpropanoid biosynthesis. Involved in lignin biosynthesis. Catalyzes the final step specific for the production of lignin monomers. Catalyzes the NADPH-dependent reduction of coniferaldehyde, 5-hydroxyconiferaldehyde, sinapaldehyde, 4-coumaraldehyde and caffeyl aldehyde to their respective alcohols. The polypeptide is Probable cinnamyl alcohol dehydrogenase 7/8 (CAD7) (Picea abies (Norway spruce)).